Here is a 102-residue protein sequence, read N- to C-terminus: Aspartyl/glutamyl-tRNA(Asn/Gln) amidotransferase subunit C (102 aa).

Belongs to the GatC family. Heterotrimer of A, B and C subunits.

The enzyme catalyses L-glutamyl-tRNA(Gln) + L-glutamine + ATP + H2O = L-glutaminyl-tRNA(Gln) + L-glutamate + ADP + phosphate + H(+). It catalyses the reaction L-aspartyl-tRNA(Asn) + L-glutamine + ATP + H2O = L-asparaginyl-tRNA(Asn) + L-glutamate + ADP + phosphate + 2 H(+). Functionally, allows the formation of correctly charged Asn-tRNA(Asn) or Gln-tRNA(Gln) through the transamidation of misacylated Asp-tRNA(Asn) or Glu-tRNA(Gln) in organisms which lack either or both of asparaginyl-tRNA or glutaminyl-tRNA synthetases. The reaction takes place in the presence of glutamine and ATP through an activated phospho-Asp-tRNA(Asn) or phospho-Glu-tRNA(Gln). The chain is Aspartyl/glutamyl-tRNA(Asn/Gln) amidotransferase subunit C from Mycobacteroides abscessus (strain ATCC 19977 / DSM 44196 / CCUG 20993 / CIP 104536 / JCM 13569 / NCTC 13031 / TMC 1543 / L948) (Mycobacterium abscessus).